The following is a 565-amino-acid chain: Salicyl-AMP ligase / salicyl-S-ArCP synthetase (565 aa).

ATP is bound by residues Gly-214, Gly-330, Val-352, Asp-436, Arg-451, and Lys-542.

This sequence belongs to the ATP-dependent AMP-binding enzyme family.

It catalyses the reaction salicylate + ATP + H(+) = 2-hydroxybenzoyl-5'-AMP + diphosphate. The catalysed reaction is 2-hydroxybenzoyl-5'-AMP + holo-[ACP] = salicyl-[ACP] + AMP + H(+). The protein operates within siderophore biosynthesis; mycobactin biosynthesis. With respect to regulation, inhibited by salicyl-AMS, an acyl-AMP analog. Also inhibited by 5'-O-[(N-acyl)sulfamoyl]adenosines. Involved in the initial steps of the mycobactin biosynthetic pathway. Catalyzes the salicylation of the aryl carrier protein (ArCP) domain of MbtB through a two-step reaction. The first step is the ATP-dependent adenylation of salicylate to generate a salicyl-AMP intermediate. The second step is the transfer of this activated salicylate to MbtB to form a salicyl-ArCP domain thioester. The chain is Salicyl-AMP ligase / salicyl-S-ArCP synthetase from Mycobacterium tuberculosis (strain ATCC 25618 / H37Rv).